The following is a 28-amino-acid chain: Dermaseptin-2.2TR (28 aa).

In terms of tissue distribution, expressed by the skin glands.

It localises to the secreted. Functionally, has antimicrobial activity. The chain is Dermaseptin-2.2TR from Phyllomedusa trinitatis (Trinidad leaf frog).